A 110-amino-acid chain; its full sequence is Phosphoribosyl-ATP pyrophosphatase (110 aa).

Belongs to the PRA-PH family.

It localises to the cytoplasm. The enzyme catalyses 1-(5-phospho-beta-D-ribosyl)-ATP + H2O = 1-(5-phospho-beta-D-ribosyl)-5'-AMP + diphosphate + H(+). It functions in the pathway amino-acid biosynthesis; L-histidine biosynthesis; L-histidine from 5-phospho-alpha-D-ribose 1-diphosphate: step 2/9. The polypeptide is Phosphoribosyl-ATP pyrophosphatase (Pseudomonas syringae pv. syringae (strain B728a)).